We begin with the raw amino-acid sequence, 204 residues long: 3-dehydroquinate dehydratase (204 aa).

3-dehydroquinate-binding positions include S9, 30–32 (ELR), and R57. H108 functions as the Proton donor/acceptor in the catalytic mechanism. The active-site Schiff-base intermediate with substrate is K133. Positions 167, 186, and 190 each coordinate 3-dehydroquinate.

The protein belongs to the type-I 3-dehydroquinase family. Homodimer.

It catalyses the reaction 3-dehydroquinate = 3-dehydroshikimate + H2O. It functions in the pathway metabolic intermediate biosynthesis; chorismate biosynthesis; chorismate from D-erythrose 4-phosphate and phosphoenolpyruvate: step 3/7. Functionally, involved in the third step of the chorismate pathway, which leads to the biosynthesis of aromatic amino acids. Catalyzes the cis-dehydration of 3-dehydroquinate (DHQ) and introduces the first double bond of the aromatic ring to yield 3-dehydroshikimate. In Metallosphaera sedula (strain ATCC 51363 / DSM 5348 / JCM 9185 / NBRC 15509 / TH2), this protein is 3-dehydroquinate dehydratase.